Reading from the N-terminus, the 28-residue chain is Antibacterial protein LC3 (28 aa).

Antibacterial activity against X.campestris, especially strain G, and P.solacearum PO1. In Bacillus subtilis, this protein is Antibacterial protein LC3.